The sequence spans 284 residues: Diaminopimelate epimerase (284 aa).

Residues N21, Q54, and N74 each contribute to the substrate site. Catalysis depends on C83, which acts as the Proton donor. Residues 84–85 (GN), N167, N200, and 218–219 (ER) contribute to the substrate site. C227 (proton acceptor) is an active-site residue. Position 228-229 (228-229 (GS)) interacts with substrate.

It belongs to the diaminopimelate epimerase family. Homodimer.

The protein resides in the cytoplasm. The enzyme catalyses (2S,6S)-2,6-diaminopimelate = meso-2,6-diaminopimelate. It functions in the pathway amino-acid biosynthesis; L-lysine biosynthesis via DAP pathway; DL-2,6-diaminopimelate from LL-2,6-diaminopimelate: step 1/1. Its function is as follows. Catalyzes the stereoinversion of LL-2,6-diaminopimelate (L,L-DAP) to meso-diaminopimelate (meso-DAP), a precursor of L-lysine and an essential component of the bacterial peptidoglycan. The sequence is that of Diaminopimelate epimerase from Buchnera aphidicola subsp. Acyrthosiphon pisum (strain 5A).